A 382-amino-acid polypeptide reads, in one-letter code: Pyrimidine monooxygenase RutA (382 aa).

Residues 68-69, asparagine 134, glutamate 143, 159-160, and serine 209 each bind FMN; these read IK and RY.

The protein belongs to the NtaA/SnaA/DszA monooxygenase family. RutA subfamily.

It catalyses the reaction uracil + FMNH2 + NADH + O2 = (Z)-3-ureidoacrylate + FMN + NAD(+) + H2O + H(+). The catalysed reaction is thymine + FMNH2 + NADH + O2 = (Z)-2-methylureidoacrylate + FMN + NAD(+) + H2O + H(+). In terms of biological role, catalyzes the pyrimidine ring opening between N-3 and C-4 by an unusual flavin hydroperoxide-catalyzed mechanism, adding oxygen atoms in the process to yield ureidoacrylate peracid, that immediately reacts with FMN forming ureidoacrylate and FMN-N(5)-oxide. The FMN-N(5)-oxide reacts spontaneously with NADH to produce FMN. Requires the flavin reductase RutF to regenerate FMN in vivo. In Shigella flexneri serotype X (strain 2002017), this protein is Pyrimidine monooxygenase RutA.